Here is an 875-residue protein sequence, read N- to C-terminus: Alanine--tRNA ligase (875 aa).

4 residues coordinate Zn(2+): His-564, His-568, Cys-666, and His-670.

The protein belongs to the class-II aminoacyl-tRNA synthetase family. As to quaternary structure, homotetramer. The cofactor is Zn(2+).

Its subcellular location is the cytoplasm. It catalyses the reaction tRNA(Ala) + L-alanine + ATP = L-alanyl-tRNA(Ala) + AMP + diphosphate. Catalyzes the attachment of alanine to tRNA(Ala) in a two-step reaction: alanine is first activated by ATP to form Ala-AMP and then transferred to the acceptor end of tRNA(Ala). Also edits incorrectly charged Ser-tRNA(Ala) and Gly-tRNA(Ala) via its editing domain. The chain is Alanine--tRNA ligase from Yersinia pestis bv. Antiqua (strain Angola).